The chain runs to 194 residues: Glycerol-3-phosphate acyltransferase (194 aa).

The next 6 helical transmembrane spans lie at 3–23 (AGLF…GLLL), 52–72 (VGIL…LLAW), 80–100 (MQAW…FLLF), 112–132 (VFLA…ILLV), 135–155 (WRYI…IIFF), and 162–182 (LLIA…SNIS).

Belongs to the PlsY family. In terms of assembly, probably interacts with PlsX.

The protein resides in the cell inner membrane. The catalysed reaction is an acyl phosphate + sn-glycerol 3-phosphate = a 1-acyl-sn-glycero-3-phosphate + phosphate. It participates in lipid metabolism; phospholipid metabolism. Catalyzes the transfer of an acyl group from acyl-phosphate (acyl-PO(4)) to glycerol-3-phosphate (G3P) to form lysophosphatidic acid (LPA). This enzyme utilizes acyl-phosphate as fatty acyl donor, but not acyl-CoA or acyl-ACP. This chain is Glycerol-3-phosphate acyltransferase, found in Trichlorobacter lovleyi (strain ATCC BAA-1151 / DSM 17278 / SZ) (Geobacter lovleyi).